The chain runs to 284 residues: Acetylglutamate kinase (284 aa).

Substrate-binding positions include 64–65, Arg-86, and Asn-181; that span reads GG.

It belongs to the acetylglutamate kinase family. ArgB subfamily.

The protein localises to the cytoplasm. It catalyses the reaction N-acetyl-L-glutamate + ATP = N-acetyl-L-glutamyl 5-phosphate + ADP. It participates in amino-acid biosynthesis; L-arginine biosynthesis; N(2)-acetyl-L-ornithine from L-glutamate: step 2/4. Functionally, catalyzes the ATP-dependent phosphorylation of N-acetyl-L-glutamate. The chain is Acetylglutamate kinase from Nitratiruptor sp. (strain SB155-2).